A 568-amino-acid chain; its full sequence is Tetratricopeptide repeat protein 22 (568 aa).

7 TPR repeats span residues 66–99, 101–133, 155–190, 203–237, 260–294, 296–328, and 432–465; these read PAVRHLLGTFSFYLEELGDAREHFLEVARKDPGN, NAWANLAHVYGQLGQEEEEEASAGRLASLMGLE, YAHGFDVGCASPEERAQVLEAGIALYDKALGYGQQI, ATLFIRLDGIFLEMGSEEQKRLPAFNRTLALLGEV, KDTFSTTPMGVHEYGYSGTEPLDCFGKAIEIAKNQ, PILNRLAKIFHFLGKQDMAVGTCNMVLAVLTDP, and PELQLLRGKCLRVQGEDANAAACFKRAVELDDEG.

This is Tetratricopeptide repeat protein 22 (Ttc22) from Mus musculus (Mouse).